Consider the following 310-residue polypeptide: Acetyl-coenzyme A carboxylase carboxyl transferase subunit alpha (310 aa).

The CoA carboxyltransferase C-terminal domain maps to 36 to 286 (NLEKEITKTY…GEYILKQLDE (251 aa)).

The protein belongs to the AccA family. In terms of assembly, acetyl-CoA carboxylase is a heterohexamer composed of biotin carboxyl carrier protein (AccB), biotin carboxylase (AccC) and two subunits each of ACCase subunit alpha (AccA) and ACCase subunit beta (AccD).

It is found in the cytoplasm. The catalysed reaction is N(6)-carboxybiotinyl-L-lysyl-[protein] + acetyl-CoA = N(6)-biotinyl-L-lysyl-[protein] + malonyl-CoA. It participates in lipid metabolism; malonyl-CoA biosynthesis; malonyl-CoA from acetyl-CoA: step 1/1. Its function is as follows. Component of the acetyl coenzyme A carboxylase (ACC) complex. First, biotin carboxylase catalyzes the carboxylation of biotin on its carrier protein (BCCP) and then the CO(2) group is transferred by the carboxyltransferase to acetyl-CoA to form malonyl-CoA. The sequence is that of Acetyl-coenzyme A carboxylase carboxyl transferase subunit alpha from Campylobacter fetus subsp. fetus (strain 82-40).